A 75-amino-acid polypeptide reads, in one-letter code: Small ribosomal subunit protein bS18 (75 aa).

It belongs to the bacterial ribosomal protein bS18 family. As to quaternary structure, part of the 30S ribosomal subunit. Forms a tight heterodimer with protein bS6.

Functionally, binds as a heterodimer with protein bS6 to the central domain of the 16S rRNA, where it helps stabilize the platform of the 30S subunit. The sequence is that of Small ribosomal subunit protein bS18 from Shewanella loihica (strain ATCC BAA-1088 / PV-4).